The following is a 462-amino-acid chain: Acetyl-CoA decarbonylase/synthase complex subunit gamma (462 aa).

Residues 1–60 form the 4Fe-4S domain; the sequence is MAQLSAMDVYNLLPKANCGACGCKTCMEFATKLVNREAKPEDCPKLDDESLEKLQELLAP. Residues C18, C21, C26, and C43 each contribute to the [4Fe-4S] cluster site.

In terms of assembly, heterodimer of delta and gamma chains. The ACDS complex is made up of alpha, epsilon, beta, gamma and delta chains with a probable stoichiometry of (alpha(2)epsilon(2))(4)-beta(8)-(gamma(1)delta(1))(8). Corrinoid is required as a cofactor. The cofactor is [4Fe-4S] cluster.

It carries out the reaction 5,6,7,8-tetrahydrosarcinapterin + methyl-Co(III)-[corrinoid Fe-S protein] = 5-methyltetrahydrosarcinapterin + Co(I)-[corrinoid Fe-S protein] + H(+). In terms of biological role, part of a complex that catalyzes the reversible cleavage of acetyl-CoA, allowing autotrophic growth from CO(2). In Methanopyrus kandleri (strain AV19 / DSM 6324 / JCM 9639 / NBRC 100938), this protein is Acetyl-CoA decarbonylase/synthase complex subunit gamma.